The following is a 569-amino-acid chain: Proline--tRNA ligase (569 aa).

It belongs to the class-II aminoacyl-tRNA synthetase family. ProS type 1 subfamily. Homodimer.

The protein localises to the cytoplasm. It carries out the reaction tRNA(Pro) + L-proline + ATP = L-prolyl-tRNA(Pro) + AMP + diphosphate. Catalyzes the attachment of proline to tRNA(Pro) in a two-step reaction: proline is first activated by ATP to form Pro-AMP and then transferred to the acceptor end of tRNA(Pro). As ProRS can inadvertently accommodate and process non-cognate amino acids such as alanine and cysteine, to avoid such errors it has two additional distinct editing activities against alanine. One activity is designated as 'pretransfer' editing and involves the tRNA(Pro)-independent hydrolysis of activated Ala-AMP. The other activity is designated 'posttransfer' editing and involves deacylation of mischarged Ala-tRNA(Pro). The misacylated Cys-tRNA(Pro) is not edited by ProRS. The chain is Proline--tRNA ligase from Desulforamulus reducens (strain ATCC BAA-1160 / DSM 100696 / MI-1) (Desulfotomaculum reducens).